We begin with the raw amino-acid sequence, 1507 residues long: Histone-lysine N-methyltransferase set-2 (1507 aa).

The segment at 1–32 is disordered; it reads MSTHDMNHHPPRKSHSKRDKPSSSNSGPKIEN. The segment covering 9-18 has biased composition (basic residues); the sequence is HPPRKSHSKR. An RRM domain is found at 128 to 199; that stretch reads VSLFNMDDNC…QNLLATKCTP (72 aa). Disordered regions lie at residues 280 to 578, 650 to 697, 803 to 826, 842 to 1058, and 1163 to 1199; these read DYTM…QPQM, EPFS…EEPA, DEEK…SNHL, SSRG…GPII, and QKPR…FKPR. Over residues 296–315 the composition is skewed to pro residues; that stretch reads PIPPPPIKEESPPPPPPPPV. The segment covering 316-327 has biased composition (low complexity); sequence ASVSNLAPVPSV. Over residues 331-342 the composition is skewed to polar residues; sequence YYNNIQPSSSTM. Residues 413-444 are compositionally biased toward basic and acidic residues; it reads VKYETYKMEKRKIKYEGGNKKYEQVHIKERTA. The span at 456 to 465 shows a compositional bias: low complexity; that stretch reads SSESASGSSS. Basic residues predominate over residues 478-488; sequence KKKKRPKSPNR. The span at 566–575 shows a compositional bias: polar residues; it reads HLQTPYQHVQ. 2 stretches are compositionally biased toward basic and acidic residues: residues 668-680 and 803-823; these read DVGR…KPSL and DEEK…EKPS. Residues 846-868 show a composition bias toward basic residues; that stretch reads FYRKQKPIPKSHPKHQEHHHHAK. The segment covering 869–908 has biased composition (low complexity); the sequence is ASVSTPVHSSSTSRNSSVAPTPQRTVSTSSSSSSAATSAR. A compositionally biased stretch (polar residues) spans 941–951; the sequence is SFSSTSIQSSP. A compositionally biased stretch (low complexity) spans 958-971; that stretch reads SSSSRTSSSSSTSS. The span at 973–982 shows a compositional bias: basic and acidic residues; sequence KQEETADEKS. Residues 990–1007 are compositionally biased toward low complexity; sequence SSDESSTTGSTATSVVSS. Positions 1015 to 1047 are enriched in basic and acidic residues; the sequence is QQEKTDGEPPKKKSQTDFISERVSKIEGEERPL. Residues 1179-1190 are compositionally biased toward pro residues; the sequence is EPPPTKRPAPPP. The short motif at 1340 to 1345 is the RxxxRR motif element; sequence RLLQRR. The 118-residue stretch at 1368–1485 folds into the SET domain; sequence KMIKFARSRI…KGEEITYDYK (118 aa). An S-adenosyl-L-methionine-binding site is contributed by Tyr-1484. In terms of domain architecture, Post-SET spans 1491–1507; sequence DKIDCLCGAKTCRGYLN.

Belongs to the class V-like SAM-binding methyltransferase superfamily. Component of the Set1C/COMPASS complex (also known as the SET2 complex), which contains at least set-2, swd-2.1, cfp-1, rbbp-5, wdr-5.1, dpy-30 and ash-2. In terms of tissue distribution, expressed in all cells of embryo. In L1 larva, it is predominantly expressed in Z2 and Z3 primordial germ cells. In adults, it is predominantly expressed in the germline.

It is found in the nucleus. It carries out the reaction L-lysyl(4)-[histone H3] + 3 S-adenosyl-L-methionine = N(6),N(6),N(6)-trimethyl-L-lysyl(4)-[histone H3] + 3 S-adenosyl-L-homocysteine + 3 H(+). The catalysed reaction is N(6)-methyl-L-lysyl(4)-[histone H3] + S-adenosyl-L-methionine = N(6),N(6)-dimethyl-L-lysyl(4)-[histone H3] + S-adenosyl-L-homocysteine + H(+). It catalyses the reaction N(6),N(6)-dimethyl-L-lysyl(4)-[histone H3] + S-adenosyl-L-methionine = N(6),N(6),N(6)-trimethyl-L-lysyl(4)-[histone H3] + S-adenosyl-L-homocysteine + H(+). Catalytic component of the COMPASS (Set1C) complex that specifically mono-, di- and trimethylates histone H3 to form H3K4me1/2/3. Binds RNAs which might negatively affect its histone methyltransferase activity. COMPASS recognizes ubiquitinated H2B on one face of the nucleosome which stimulates the methylation of H3 on the opposing face. H3 'Lys-4' methylation represents a specific tag for epigenetic transcriptional activation. Implicated in the epigenetic inheritance of lifespan over several generations. Acts in the germline to limit the longevity of the soma, probably by regulating a lipid metabolism pathway that signals from the germline to the intestine, thereby preventing accumulation of mono-unsaturated fatty acids. Methylation in the germline is required for germline development and fertility, possibly by ensuring genome stability. May act redundantly with mes-3 and mes-4 proteins in the development of a fertile germline. Required for RNAi. Functions as an antagonist of hpl-1 and hpl-2 activity in growth and somatic gonad development. Cooperates with jmjd-3.1 and egl-27 to ensure robust transdifferentiation of the Y rectal cell to the PDA motor neuron during larval development. This is Histone-lysine N-methyltransferase set-2 (set-2) from Caenorhabditis elegans.